A 181-amino-acid chain; its full sequence is Nucleoside triphosphate/diphosphate phosphatase (181 aa).

The active-site Proton donor is Arg-26. Residues Asn-90, Asp-106, Asp-108, Asp-110, Asp-123, and Glu-126 each coordinate Mg(2+).

The protein belongs to the Ntdp family. The cofactor is Mg(2+).

It carries out the reaction a ribonucleoside 5'-triphosphate + H2O = a ribonucleoside 5'-diphosphate + phosphate + H(+). The catalysed reaction is a ribonucleoside 5'-diphosphate + H2O = a ribonucleoside 5'-phosphate + phosphate + H(+). Its function is as follows. Has nucleoside phosphatase activity towards nucleoside triphosphates and nucleoside diphosphates. This Staphylococcus carnosus (strain TM300) protein is Nucleoside triphosphate/diphosphate phosphatase.